The chain runs to 174 residues: Fimbria A protein (174 aa).

The N-terminal stretch at 1–22 is a signal peptide; that stretch reads MKLNKIMLATVLAFGVSSLANA. Cys-41 and Cys-80 are disulfide-bonded.

Belongs to the fimbrial protein family.

It localises to the fimbrium. Its function is as follows. Major structural component of mannose-resistant fimbriae of Serratia marcescens. This Serratia marcescens protein is Fimbria A protein (smfA).